We begin with the raw amino-acid sequence, 463 residues long: Ataxin-10 homolog (463 aa).

The protein belongs to the ataxin-10 family.

It is found in the cytoplasm. May play a role in the regulation of cytokinesis. In Candida albicans (strain SC5314 / ATCC MYA-2876) (Yeast), this protein is Ataxin-10 homolog (CTR86).